We begin with the raw amino-acid sequence, 860 residues long: Glucans biosynthesis glucosyltransferase H (860 aa).

Helical transmembrane passes span 141 to 161 (FILL…MKGI), 187 to 207 (VLPY…FCWV), 515 to 535 (VFLT…FLVL), 572 to 592 (LFST…MLIW), 599 to 619 (FGGV…SVLL), and 682 to 702 (FLWW…VSVI).

This sequence belongs to the glycosyltransferase 2 family. OpgH subfamily.

The protein resides in the cell inner membrane. Its pathway is glycan metabolism; osmoregulated periplasmic glucan (OPG) biosynthesis. Involved in the biosynthesis of osmoregulated periplasmic glucans (OPGs). This chain is Glucans biosynthesis glucosyltransferase H, found in Pseudomonas paraeruginosa (strain DSM 24068 / PA7) (Pseudomonas aeruginosa (strain PA7)).